Consider the following 299-residue polypeptide: Zinc import ATP-binding protein ZnuC (299 aa).

Positions 13–228 (VSLANAGVQR…PEYMRLFGGT (216 aa)) constitute an ABC transporter domain. ATP is bound at residue 45–52 (GPNGSGKS).

It belongs to the ABC transporter superfamily. Zinc importer (TC 3.A.1.15.5) family. In terms of assembly, the complex is composed of two ATP-binding proteins (ZnuC), two transmembrane proteins (ZnuB) and a solute-binding protein (ZnuA).

The protein localises to the cell inner membrane. The enzyme catalyses Zn(2+)(out) + ATP(in) + H2O(in) = Zn(2+)(in) + ADP(in) + phosphate(in) + H(+)(in). Part of the ABC transporter complex ZnuABC involved in zinc import. Responsible for energy coupling to the transport system. The chain is Zinc import ATP-binding protein ZnuC from Agrobacterium fabrum (strain C58 / ATCC 33970) (Agrobacterium tumefaciens (strain C58)).